A 188-amino-acid polypeptide reads, in one-letter code: MSIMSDNWIKKMAESENMISPFVDKQVRTHNNQHILSYGLSSYGYDARVSNEFKIFTNTKPSIIDPKKFDQDCLITKISDICIIPPNSFALGTTIEYFKMPRDVIAICIGKSTYARCGIIINVTPLEPECEGHITLEFSNTTPLPAKIYAGEGACQFLFLKGDQPCNTSYLDRYGRYTKQIGVTLPTV.

Residues 111–116 (KSTYAR), 135–137 (TLE), glutamine 156, tyrosine 170, lysine 179, and glutamine 180 each bind dCTP. Glutamate 137 functions as the Proton donor/acceptor in the catalytic mechanism.

It belongs to the dCTP deaminase family. As to quaternary structure, homotrimer.

It carries out the reaction dCTP + H2O + H(+) = dUTP + NH4(+). It participates in pyrimidine metabolism; dUMP biosynthesis; dUMP from dCTP (dUTP route): step 1/2. In terms of biological role, catalyzes the deamination of dCTP to dUTP. The chain is dCTP deaminase from Orientia tsutsugamushi (strain Ikeda) (Rickettsia tsutsugamushi).